The sequence spans 187 residues: Adenine phosphoribosyltransferase (187 aa).

It belongs to the purine/pyrimidine phosphoribosyltransferase family. As to quaternary structure, homodimer.

The protein localises to the cytoplasm. It carries out the reaction AMP + diphosphate = 5-phospho-alpha-D-ribose 1-diphosphate + adenine. Its pathway is purine metabolism; AMP biosynthesis via salvage pathway; AMP from adenine: step 1/1. Functionally, catalyzes a salvage reaction resulting in the formation of AMP, that is energically less costly than de novo synthesis. The chain is Adenine phosphoribosyltransferase from Paracoccus denitrificans (strain Pd 1222).